A 377-amino-acid chain; its full sequence is Glutamate 5-kinase (377 aa).

ATP is bound at residue K21. Residues S61, D149, and N161 each contribute to the substrate site. ATP contacts are provided by residues 181 to 182 (SD) and 223 to 229 (SGGMTSK). The PUA domain maps to 286–363 (RGSVQVDAGA…REHEELLGYA (78 aa)).

It belongs to the glutamate 5-kinase family.

The protein resides in the cytoplasm. The enzyme catalyses L-glutamate + ATP = L-glutamyl 5-phosphate + ADP. It functions in the pathway amino-acid biosynthesis; L-proline biosynthesis; L-glutamate 5-semialdehyde from L-glutamate: step 1/2. Its function is as follows. Catalyzes the transfer of a phosphate group to glutamate to form L-glutamate 5-phosphate. The sequence is that of Glutamate 5-kinase from Novosphingobium aromaticivorans (strain ATCC 700278 / DSM 12444 / CCUG 56034 / CIP 105152 / NBRC 16084 / F199).